A 1966-amino-acid chain; its full sequence is Alpha-protein kinase 2 (1966 aa).

Disordered regions lie at residues 23–65, 211–231, 1211–1259, 1303–1365, 1386–1423, and 1437–1463; these read NSSP…STGL, AMNS…DTDK, LKSN…AYSD, SLPN…EGAG, KTQG…VNGK, and NKPV…SVRP. Positions 211-227 are enriched in polar residues; it reads AMNSEQSPDQPFSIASN. The span at 1211–1221 shows a compositional bias: low complexity; that stretch reads LKSNKKSSSSD. A compositionally biased stretch (basic and acidic residues) spans 1325-1342; sequence SDGKMRSKHKEKPDDKQQ. Basic residues predominate over residues 1388 to 1397; it reads QGKKKKKHVQ. Residues 1401–1417 show a composition bias toward basic and acidic residues; sequence PKPENDAPTDVRSESRQ. In terms of domain architecture, Ig-like spans 1577-1659; the sequence is PRVVSEIQAD…SLIVANISVS (83 aa). Cysteine 1599 and cysteine 1649 form a disulfide bridge. The Alpha-type protein kinase domain maps to 1702–1934; the sequence is KEDFLSDQYF…YCELLGLVSL (233 aa). Residues 1937 to 1966 are disordered; the sequence is KPKRTVAPPKPKTQPVPKKKTFGPVLNAKS.

This sequence belongs to the protein kinase superfamily. Alpha-type protein kinase family. ALPK subfamily. In terms of tissue distribution, expressed in developing cardiac tissue.

The protein resides in the basolateral cell membrane. The catalysed reaction is L-seryl-[protein] + ATP = O-phospho-L-seryl-[protein] + ADP + H(+). It carries out the reaction L-threonyl-[protein] + ATP = O-phospho-L-threonyl-[protein] + ADP + H(+). Its function is as follows. Protein kinase that recognizes phosphorylation sites in which the surrounding peptides have an alpha-helical conformation. Regulates cardiac development and cardiomyocyte differentiation by negatively regulating Wnt/beta-catenin signaling. The sequence is that of Alpha-protein kinase 2 (alpk2) from Danio rerio (Zebrafish).